Here is an 885-residue protein sequence, read N- to C-terminus: Translation initiation factor IF-2 (885 aa).

Residues 1 to 295 form a disordered region; it reads MTDNKDDKTI…EKFKRSQMQE (295 aa). Residues 63–77 are compositionally biased toward low complexity; it reads PVAAAPAAARPAEQR. The span at 78–94 shows a compositional bias: pro residues; it reads PMPPQPSGRPAPQPQPH. Positions 130-183 are enriched in basic and acidic residues; it reads RDAEEAKRRAEEEVRRRREEEERIAREKEEAARRAAEEAARPAVEAEKVEEKVE. Positions 184 to 201 are enriched in low complexity; it reads AATPAVAETRPLSERPAP. Residues 383-550 enclose the tr-type G domain; that stretch reads ARPPIVTIMG…AILLQSEILD (168 aa). The interval 392 to 399 is G1; sequence GHVDHGKT. 392-399 serves as a coordination point for GTP; that stretch reads GHVDHGKT. Positions 417-421 are G2; sequence GITQH. A G3 region spans residues 438–441; that stretch reads DTPG. Residues 438 to 442 and 492 to 495 contribute to the GTP site; these read DTPGH and NKID. The G4 stretch occupies residues 492 to 495; the sequence is NKID. Residues 528–530 are G5; the sequence is SAK.

The protein belongs to the TRAFAC class translation factor GTPase superfamily. Classic translation factor GTPase family. IF-2 subfamily.

The protein resides in the cytoplasm. One of the essential components for the initiation of protein synthesis. Protects formylmethionyl-tRNA from spontaneous hydrolysis and promotes its binding to the 30S ribosomal subunits. Also involved in the hydrolysis of GTP during the formation of the 70S ribosomal complex. The polypeptide is Translation initiation factor IF-2 (Sinorhizobium medicae (strain WSM419) (Ensifer medicae)).